The primary structure comprises 129 residues: 4-amino-4-deoxychorismate mutase (129 aa).

Residues 16-107 form the Chorismate mutase domain; it reads AAATDPLDAL…ETCRLEDEWI (92 aa).

The enzyme catalyses 4-amino-4-deoxychorismate = 4-amino-4-deoxyprephenate. The protein operates within antibiotic biosynthesis. Involved in pristinamycin I biosynthesis. Probably catalyzes the conversion of 4-amino-4-deoxychorismate to 4-amino-4-deoxyprephenate. The polypeptide is 4-amino-4-deoxychorismate mutase (Streptomyces pristinaespiralis).